Here is a 701-residue protein sequence, read N- to C-terminus: Elongation factor G (701 aa).

The tr-type G domain occupies 11-287 (TKVRNIGIMA…AVIDYLPSPL (277 aa)). GTP contacts are provided by residues 20–27 (AHIDAGKT), 84–88 (DTPGH), and 138–141 (NKMD).

The protein belongs to the TRAFAC class translation factor GTPase superfamily. Classic translation factor GTPase family. EF-G/EF-2 subfamily.

It is found in the cytoplasm. In terms of biological role, catalyzes the GTP-dependent ribosomal translocation step during translation elongation. During this step, the ribosome changes from the pre-translocational (PRE) to the post-translocational (POST) state as the newly formed A-site-bound peptidyl-tRNA and P-site-bound deacylated tRNA move to the P and E sites, respectively. Catalyzes the coordinated movement of the two tRNA molecules, the mRNA and conformational changes in the ribosome. The protein is Elongation factor G of Mycobacterium avium (strain 104).